Here is a 555-residue protein sequence, read N- to C-terminus: Potassium-transporting ATPase potassium-binding subunit (555 aa).

Transmembrane regions (helical) follow at residues 2 to 22, 60 to 80, 130 to 150, 173 to 193, 246 to 266, 278 to 298, 374 to 394, 412 to 432, 483 to 503, and 525 to 545; these read IWVAVVITMLLFILVAKPTGI, QYALSLVLLNGFMIVVVYFIF, IGITFLMFAAPATTLALVMAF, VFLPIAFVTALVFVALGVPQT, MSNILQMMLMMLLPTALPFTY, ILFVSLFMVFLLGFITITTSE, AGFVNIIMYAIIAVFISGLMV, LIAVTILFHPLLILGFSALAL, LVMFLGRYFSLVTMLAVAASL, and GIFIGTIVIVGALTFFPMLVL.

This sequence belongs to the KdpA family. As to quaternary structure, the system is composed of three essential subunits: KdpA, KdpB and KdpC.

It localises to the cell membrane. In terms of biological role, part of the high-affinity ATP-driven potassium transport (or Kdp) system, which catalyzes the hydrolysis of ATP coupled with the electrogenic transport of potassium into the cytoplasm. This subunit binds the extracellular potassium ions and delivers the ions to the membrane domain of KdpB through an intramembrane tunnel. In Bacillus cereus (strain AH820), this protein is Potassium-transporting ATPase potassium-binding subunit.